We begin with the raw amino-acid sequence, 134 residues long: Probable dihydroneopterin aldolase (134 aa).

Substrate-binding positions include Glu-26, Tyr-59, and 78 to 79 (IE). Lys-106 serves as the catalytic Proton donor/acceptor.

It belongs to the DHNA family.

It catalyses the reaction 7,8-dihydroneopterin = 6-hydroxymethyl-7,8-dihydropterin + glycolaldehyde. It functions in the pathway cofactor biosynthesis; tetrahydrofolate biosynthesis; 2-amino-4-hydroxy-6-hydroxymethyl-7,8-dihydropteridine diphosphate from 7,8-dihydroneopterin triphosphate: step 3/4. Functionally, catalyzes the conversion of 7,8-dihydroneopterin to 6-hydroxymethyl-7,8-dihydropterin. This chain is Probable dihydroneopterin aldolase (folB), found in Chlamydia pneumoniae (Chlamydophila pneumoniae).